Consider the following 213-residue polypeptide: MAQETNQTPGPMLCSTGCGFYGNPRTNGMCSVCYKEHLQRQQNSGRMSPMGTASGSNSPTSDSASVQRADATLNNCEGAAGSTSEKSRNVPVAALPVTQQMTEMSISREDKITSPKTEVSEPVVTQPSPSVSQPSSSQSEEKAPELPKPKKNRCFMCRKKVGLTGFDCRCGNLFCGLHRYSDKHNCPYDYKAEAAAKIRKENPVVVAEKIQRI.

The segment at 8 to 42 adopts an A20-type zinc-finger fold; sequence TPGPMLCSTGCGFYGNPRTNGMCSVCYKEHLQRQQ. Zn(2+)-binding residues include cysteine 14, cysteine 18, cysteine 30, and cysteine 33. The disordered stretch occupies residues 39 to 149; that stretch reads QRQQNSGRMS…EEKAPELPKP (111 aa). The segment covering 40-66 has biased composition (polar residues); the sequence is RQQNSGRMSPMGTASGSNSPTSDSASV. Serine 48 and serine 58 each carry phosphoserine. A compositionally biased stretch (low complexity) spans 120–138; it reads SEPVVTQPSPSVSQPSSSQ. Residues 139 to 148 show a composition bias toward basic and acidic residues; sequence SEEKAPELPK. An AN1-type zinc finger spans residues 148–194; that stretch reads KPKKNRCFMCRKKVGLTGFDCRCGNLFCGLHRYSDKHNCPYDYKAEA. Zn(2+)-binding residues include cysteine 154, cysteine 157, cysteine 168, cysteine 170, cysteine 175, histidine 178, histidine 184, and cysteine 186. Lysine 209 is modified (N6-acetyllysine).

Homooligomer and/or heterooligomer. Interacts (via A20-type domain) with IKBKG and RIPK1 and with TRAF6 (via AN1-type domain). Interacts with ubiquitin and polyubiquitinated proteins. Identified in a heterotrimeric complex with ubiquitin and SQSTM1, where ZFAND5 and SQSTM1 both interact with the same ubiquitin molecule.

It localises to the cytoplasm. Its function is as follows. Involved in protein degradation via the ubiquitin-proteasome system. May act by anchoring ubiquitinated proteins to the proteasome. Plays a role in ubiquitin-mediated protein degradation during muscle atrophy. Plays a role in the regulation of NF-kappa-B activation and apoptosis. Inhibits NF-kappa-B activation triggered by overexpression of RIPK1 and TRAF6 but not of RELA. Also inhibits tumor necrosis factor (TNF), IL-1 and TLR4-induced NF-kappa-B activation in a dose-dependent manner. Overexpression sensitizes cells to TNF-induced apoptosis. Is a potent inhibitory factor for osteoclast differentiation. The chain is AN1-type zinc finger protein 5 (Zfand5) from Rattus norvegicus (Rat).